Here is a 60-residue protein sequence, read N- to C-terminus: UPF0434 protein Aave_2563 (60 aa).

This sequence belongs to the UPF0434 family.

In Paracidovorax citrulli (strain AAC00-1) (Acidovorax citrulli), this protein is UPF0434 protein Aave_2563.